The following is a 406-amino-acid chain: Isocitrate dehydrogenase [NADP] (406 aa).

NADP(+) contacts are provided by Lys72, Thr75, Thr77, and Arg82. Residues Ser94, Asn96, Arg100, Glu110, and Arg132 each coordinate D-threo-isocitrate. The Mn(2+) site is built by Asp250, Asp273, and Asp277. NADP(+)-binding residues include Gly308, Thr309, Val310, His313, and Asn326.

This sequence belongs to the isocitrate and isopropylmalate dehydrogenases family. As to quaternary structure, homodimer. The cofactor is Mg(2+). Requires Mn(2+) as cofactor.

The enzyme catalyses D-threo-isocitrate + NADP(+) = 2-oxoglutarate + CO2 + NADPH. Catalyzes the oxidative decarboxylation of isocitrate to 2-oxoglutarate and carbon dioxide with the concomitant reduction of NADP(+). In Sphingobium yanoikuyae (Sphingomonas yanoikuyae), this protein is Isocitrate dehydrogenase [NADP] (icd).